A 430-amino-acid polypeptide reads, in one-letter code: MNTRATTAILVNQVVQKKCSLTALLSANKKNQSLIQELCYGTLRWYFKLKLIAEKLLHAPLRDKDHDIFCLILTGFYQLNYLNIPTHTIVNQTVGAAEILKKPWAKGLINKLLRRFIAEKDELLTFTEKTIEGQYAHPLWFIQHIKKAWPDHWESILIANNARPPMTLRVNLTKISREIYLEMLDQKNISAKPLDFLPAAIQLEKPCSVHQLPGFNEGYCYIQDAAGQFAAYLLKLENNQTVLDACAAPGSKTSHILEVNPHLKTLVAIDNNKQRLNRIKENITRLGLRQEHLQCLLADVSQIDQWSSGELFDRILLDAPCSATGVIRRHPDIKLLRQPGDISQYHQKKLQLLNALWTVLKAGGFLLYSTCSVLPDENEKVIEEFLSTHDKVELSPTNVHGGLQLKYGVQQLPGQDNKDGFYYSLLFKNP.

S-adenosyl-L-methionine is bound by residues 246-252 (CAAPGSK), Asp-270, Asp-299, and Asp-318. The active-site Nucleophile is the Cys-371.

Belongs to the class I-like SAM-binding methyltransferase superfamily. RsmB/NOP family.

The protein resides in the cytoplasm. The catalysed reaction is cytidine(967) in 16S rRNA + S-adenosyl-L-methionine = 5-methylcytidine(967) in 16S rRNA + S-adenosyl-L-homocysteine + H(+). In terms of biological role, specifically methylates the cytosine at position 967 (m5C967) of 16S rRNA. This chain is Probable ribosomal RNA small subunit methyltransferase B, found in Coxiella burnetii (strain RSA 493 / Nine Mile phase I).